The chain runs to 520 residues: Cobyric acid synthase (520 aa).

Residues 254-465 form the GATase cobBQ-type domain; that stretch reads ELDIAVVRLP…IHGILDNDGL (212 aa). Residue cysteine 335 is the Nucleophile of the active site. Residue histidine 457 is part of the active site.

Belongs to the CobB/CobQ family. CobQ subfamily.

It participates in cofactor biosynthesis; adenosylcobalamin biosynthesis. In terms of biological role, catalyzes amidations at positions B, D, E, and G on adenosylcobyrinic A,C-diamide. NH(2) groups are provided by glutamine, and one molecule of ATP is hydrogenolyzed for each amidation. In Sorangium cellulosum (strain So ce56) (Polyangium cellulosum (strain So ce56)), this protein is Cobyric acid synthase.